We begin with the raw amino-acid sequence, 641 residues long: Chaperone protein DnaK 2 (641 aa).

Threonine 199 carries the post-translational modification Phosphothreonine; by autocatalysis. Residues methionine 601–glutamine 616 show a composition bias toward low complexity. Residues methionine 601–lysine 641 are disordered. The span at threonine 626–phenylalanine 635 shows a compositional bias: acidic residues.

Belongs to the heat shock protein 70 family.

Functionally, acts as a chaperone. The sequence is that of Chaperone protein DnaK 2 from Photobacterium profundum (strain SS9).